The primary structure comprises 343 residues: Plasminogen (343 aa).

2 consecutive Kringle domains span residues Ala-1–Leu-17 and Ala-41–Ala-120. The tract at residues Ala-1–Cys-140 is plasmin heavy chain A. 3 cysteine pairs are disulfide-bonded: Cys-15-Cys-94, Cys-36-Cys-77, and Cys-65-Cys-89. The Peptidase S1 domain occupies Val-114–Arg-341. Ser-130 bears the Phosphoserine mark. The cysteines at positions 140 and 156 are disulfide-linked. A plasmin light chain B region spans residues Gly-141–Tyr-343. Catalysis depends on charge relay system residues His-155 and Asp-198. A Phosphoserine modification is found at Ser-221. Cystine bridges form between Cys-232–Cys-299, Cys-262–Cys-278, and Cys-289–Cys-317. Ser-293 functions as the Charge relay system in the catalytic mechanism.

It belongs to the peptidase S1 family. Plasminogen subfamily. As to quaternary structure, interacts with CSPG4 and AMOT. Interacts (via the Kringle domains) with HRG; the interaction tethers PLG to the cell surface and enhances its activation. Interacts (via Kringle 4 domain) with ADA; the interaction stimulates PLG activation when in complex with DPP4. Angiostatin: Interacts with ATP5F1A; the interaction inhibits most of the angiogenic effects of angiostatin.

The protein resides in the secreted. The catalysed reaction is Preferential cleavage: Lys-|-Xaa &gt; Arg-|-Xaa, higher selectivity than trypsin. Converts fibrin into soluble products.. With respect to regulation, converted into plasmin by plasminogen activators, both plasminogen and its activator being bound to fibrin. Cannot be activated with streptokinase. Functionally, plasmin dissolves the fibrin of blood clots and acts as a proteolytic factor in a variety of other processes including embryonic development, tissue remodeling, tumor invasion, and inflammation. In ovulation, weakens the walls of the Graafian follicle. It activates the urokinase-type plasminogen activator, collagenases and several complement zymogens, such as C1, C4 and C5. Cleavage of fibronectin and laminin leads to cell detachment and apoptosis. Also cleaves fibrin, thrombospondin and von Willebrand factor. Its role in tissue remodeling and tumor invasion may be modulated by CSPG4. Binds to cells. The polypeptide is Plasminogen (PLG) (Ovis aries (Sheep)).